The sequence spans 374 residues: UDP-N-acetylglucosamine--N-acetylmuramyl-(pentapeptide) pyrophosphoryl-undecaprenol N-acetylglucosamine transferase (374 aa).

Residues 13-15 (TGG), Asn124, Arg165, Ser193, and Gln294 contribute to the UDP-N-acetyl-alpha-D-glucosamine site.

The protein belongs to the glycosyltransferase 28 family. MurG subfamily.

Its subcellular location is the cell inner membrane. The enzyme catalyses di-trans,octa-cis-undecaprenyl diphospho-N-acetyl-alpha-D-muramoyl-L-alanyl-D-glutamyl-meso-2,6-diaminopimeloyl-D-alanyl-D-alanine + UDP-N-acetyl-alpha-D-glucosamine = di-trans,octa-cis-undecaprenyl diphospho-[N-acetyl-alpha-D-glucosaminyl-(1-&gt;4)]-N-acetyl-alpha-D-muramoyl-L-alanyl-D-glutamyl-meso-2,6-diaminopimeloyl-D-alanyl-D-alanine + UDP + H(+). It functions in the pathway cell wall biogenesis; peptidoglycan biosynthesis. Functionally, cell wall formation. Catalyzes the transfer of a GlcNAc subunit on undecaprenyl-pyrophosphoryl-MurNAc-pentapeptide (lipid intermediate I) to form undecaprenyl-pyrophosphoryl-MurNAc-(pentapeptide)GlcNAc (lipid intermediate II). In Rhizobium rhizogenes (strain K84 / ATCC BAA-868) (Agrobacterium radiobacter), this protein is UDP-N-acetylglucosamine--N-acetylmuramyl-(pentapeptide) pyrophosphoryl-undecaprenol N-acetylglucosamine transferase.